The sequence spans 101 residues: MVRVIIEFLGGLDVIVKKQRQYKVDVQLDGKDEINVGDLIQWIVDNLIEHEGDVNVFLENDSIRPGILTLINDTDWELEGEKEYVLEDGDVVSFTSTLHGG.

Gly101 is modified (1-thioglycine). Gly101 participates in a covalent cross-link: Glycyl lysine isopeptide (Gly-Lys) (interchain with K-? in acceptor proteins).

This sequence belongs to the URM1 family. C-terminal thiocarboxylation occurs in 2 steps, it is first acyl-adenylated (-COAMP) via the hesA/moeB/thiF part of UBA4, then thiocarboxylated (-COSH) via the rhodanese domain of UBA4.

The protein localises to the cytoplasm. It participates in tRNA modification; 5-methoxycarbonylmethyl-2-thiouridine-tRNA biosynthesis. Functionally, acts as a sulfur carrier required for 2-thiolation of mcm(5)S(2)U at tRNA wobble positions of cytosolic tRNA(Lys), tRNA(Glu) and tRNA(Gln). Serves as sulfur donor in tRNA 2-thiolation reaction by being thiocarboxylated (-COSH) at its C-terminus by the MOCS3 homolog UBA4. The sulfur is then transferred to tRNA to form 2-thiolation of mcm(5)S(2)U. Prior mcm(5) tRNA modification by the elongator complex is required for 2-thiolation. Also acts as a ubiquitin-like protein (UBL) that is covalently conjugated via an isopeptide bond to lysine residues of target proteins such as AHP1. The thiocarboxylated form serves as substrate for conjugation and oxidative stress specifically induces the formation of UBL-protein conjugates. The sequence is that of Ubiquitin-related modifier 1 from Kluyveromyces lactis (strain ATCC 8585 / CBS 2359 / DSM 70799 / NBRC 1267 / NRRL Y-1140 / WM37) (Yeast).